The sequence spans 284 residues: Nucleotide-binding protein NMC0691 (284 aa).

Residue 8-15 coordinates ATP; it reads GLSGSGKS. 58–61 contacts GTP; it reads DVRS.

Belongs to the RapZ-like family.

Functionally, displays ATPase and GTPase activities. In Neisseria meningitidis serogroup C / serotype 2a (strain ATCC 700532 / DSM 15464 / FAM18), this protein is Nucleotide-binding protein NMC0691.